A 190-amino-acid polypeptide reads, in one-letter code: Threonylcarbamoyl-AMP synthase (190 aa).

Residues Gly7–Gly190 enclose the YrdC-like domain.

The protein belongs to the SUA5 family. TsaC subfamily.

The protein localises to the cytoplasm. It carries out the reaction L-threonine + hydrogencarbonate + ATP = L-threonylcarbamoyladenylate + diphosphate + H2O. Its function is as follows. Required for the formation of a threonylcarbamoyl group on adenosine at position 37 (t(6)A37) in tRNAs that read codons beginning with adenine. Catalyzes the conversion of L-threonine, HCO(3)(-)/CO(2) and ATP to give threonylcarbamoyl-AMP (TC-AMP) as the acyladenylate intermediate, with the release of diphosphate. The chain is Threonylcarbamoyl-AMP synthase from Escherichia coli O157:H7.